The following is a 473-amino-acid chain: Ribosomal protein uS12 methylthiotransferase RimO (473 aa).

Residues 30-141 (ASVAVLHLGC…IVQIIERVER (112 aa)) enclose the MTTase N-terminal domain. [4Fe-4S] cluster is bound by residues C39, C75, C104, C179, C183, and C186. The region spanning 165–394 (TTHAPVAYLR…MQVQQGITFR (230 aa)) is the Radical SAM core domain. The 67-residue stretch at 397 to 463 (REQVGRVVPV…PYDLFGQVVA (67 aa)) folds into the TRAM domain.

The protein belongs to the methylthiotransferase family. RimO subfamily. It depends on [4Fe-4S] cluster as a cofactor.

It is found in the cytoplasm. The enzyme catalyses L-aspartate(89)-[ribosomal protein uS12]-hydrogen + (sulfur carrier)-SH + AH2 + 2 S-adenosyl-L-methionine = 3-methylsulfanyl-L-aspartate(89)-[ribosomal protein uS12]-hydrogen + (sulfur carrier)-H + 5'-deoxyadenosine + L-methionine + A + S-adenosyl-L-homocysteine + 2 H(+). Catalyzes the methylthiolation of an aspartic acid residue of ribosomal protein uS12. The chain is Ribosomal protein uS12 methylthiotransferase RimO from Synechococcus sp. (strain JA-2-3B'a(2-13)) (Cyanobacteria bacterium Yellowstone B-Prime).